The chain runs to 447 residues: Voltage-gated purine nucleotide uniporter SLC17A9 (447 aa).

The interval 1–26 is disordered; that stretch reads MPSQRSSLMQPIPEETRKTPSAAAED. Positions 14–26 are enriched in basic and acidic residues; it reads EETRKTPSAAAED. Transmembrane regions (helical) follow at residues 36-58, 74-94, 103-123, 129-149, 169-189, 197-217, 252-272, 287-307, 327-347, 380-400, and 413-433; these read LWTGMLLLGTCLLYCTRVTMPVC, GIVLSSFFWGYCLTQVVGGHL, VILLSASAWGFITVTTPLLAH, LAFVTFSRILTGLLQGVYFPA, TVGAGSQVGTLVTGGIGSVLL, VFYFSGGLTLLWVYYVYKYLL, VWAVICSQLSSACSFFILLSW, WVFNVVPWLLAIPASLFSGFI, VMGLGLSSIFALCLGHTTSFL, GFLFGVANTAGALAGVVGVCL, and CVFHLVAIVSNLGLGTFLVFG.

It belongs to the major facilitator superfamily. Sodium/anion cotransporter family.

The protein localises to the cytoplasmic vesicle. The protein resides in the secretory vesicle. It is found in the chromaffin granule membrane. Its subcellular location is the secretory vesicle membrane. It localises to the lysosome membrane. The enzyme catalyses ATP(in) = ATP(out). It carries out the reaction ADP(in) = ADP(out). The catalysed reaction is GTP(in) = GTP(out). Activity is chloride-dependent. Its function is as follows. Voltage-gated ATP nucleotide uniporter that can also transport the purine nucleotides ADP and GTP. Uses the membrane potential as the driving force to control ATP accumulation in lysosomes and secretory vesicles. By controlling ATP storage in lysosomes, regulates ATP-dependent proteins of these organelles. Also indirectly regulates the exocytosis of ATP through its import into lysosomes in astrocytes and secretory vesicles such as adrenal chromaffin granules, mucin granules and synaptic vesicles. The sequence is that of Voltage-gated purine nucleotide uniporter SLC17A9 from Rattus norvegicus (Rat).